Consider the following 321-residue polypeptide: Ribosomal RNA small subunit methyltransferase H (321 aa).

S-adenosyl-L-methionine contacts are provided by residues 42–44 (GGH), aspartate 62, phenylalanine 86, aspartate 107, and glutamine 114.

It belongs to the methyltransferase superfamily. RsmH family.

The protein localises to the cytoplasm. The catalysed reaction is cytidine(1402) in 16S rRNA + S-adenosyl-L-methionine = N(4)-methylcytidine(1402) in 16S rRNA + S-adenosyl-L-homocysteine + H(+). In terms of biological role, specifically methylates the N4 position of cytidine in position 1402 (C1402) of 16S rRNA. The polypeptide is Ribosomal RNA small subunit methyltransferase H (Herminiimonas arsenicoxydans).